Here is a 317-residue protein sequence, read N- to C-terminus: tRNA pseudouridine synthase B (317 aa).

The active-site Nucleophile is the D47.

This sequence belongs to the pseudouridine synthase TruB family. Type 1 subfamily.

The enzyme catalyses uridine(55) in tRNA = pseudouridine(55) in tRNA. Functionally, responsible for synthesis of pseudouridine from uracil-55 in the psi GC loop of transfer RNAs. The protein is tRNA pseudouridine synthase B of Vibrio atlanticus (strain LGP32) (Vibrio splendidus (strain Mel32)).